Reading from the N-terminus, the 408-residue chain is 3-phosphoshikimate 1-carboxyvinyltransferase (408 aa).

3-phosphoshikimate-binding residues include K20, S21, and R25. Residue K20 participates in phosphoenolpyruvate binding. R111 is a phosphoenolpyruvate binding site. Residues S151, S152, Q153, S178, D293, and K320 each coordinate 3-phosphoshikimate. Q153 lines the phosphoenolpyruvate pocket. D293 functions as the Proton acceptor in the catalytic mechanism. Positions 324, 365, and 389 each coordinate phosphoenolpyruvate.

The protein belongs to the EPSP synthase family. In terms of assembly, monomer.

The protein resides in the cytoplasm. The enzyme catalyses 3-phosphoshikimate + phosphoenolpyruvate = 5-O-(1-carboxyvinyl)-3-phosphoshikimate + phosphate. Its pathway is metabolic intermediate biosynthesis; chorismate biosynthesis. Its function is as follows. Catalyzes the transfer of the enolpyruvyl moiety of phosphoenolpyruvate (PEP) to the 5-hydroxyl of shikimate-3-phosphate (S3P) to produce enolpyruvyl shikimate-3-phosphate and inorganic phosphate. In Sulfurisphaera tokodaii (strain DSM 16993 / JCM 10545 / NBRC 100140 / 7) (Sulfolobus tokodaii), this protein is 3-phosphoshikimate 1-carboxyvinyltransferase.